Reading from the N-terminus, the 62-residue chain is Short neurotoxin C (62 aa).

The span at 1-16 (RRCFNQQSSQPQTNKS) shows a compositional bias: polar residues. The segment at 1-21 (RRCFNQQSSQPQTNKSCPPGE) is disordered. 4 disulfide bridges follow: Cys-3/Cys-24, Cys-17/Cys-41, Cys-43/Cys-54, and Cys-55/Cys-60.

It belongs to the three-finger toxin family. Short-chain subfamily. Type I alpha-neurotoxin sub-subfamily. Expressed by the venom gland.

It localises to the secreted. Functionally, binds to muscle nicotinic acetylcholine receptor (nAChR) and inhibit acetylcholine from binding to the receptor, thereby impairing neuromuscular transmission. This Laticauda crockeri (Crocker's sea snake) protein is Short neurotoxin C.